The chain runs to 144 residues: Complexin-1 (144 aa).

A compositionally biased stretch (gly residues) spans methionine 1–leucine 10. The segment at methionine 1–leucine 119 is disordered. 2 stretches are compositionally biased toward basic and acidic residues: residues leucine 18–glycine 27 and alanine 36–leucine 86. Residues glutamate 29–lysine 67 are a coiled coil. Residues leucine 103–phenylalanine 112 are compositionally biased toward polar residues. Residue cysteine 141 is modified to Cysteine methyl ester. Residue cysteine 141 is the site of S-farnesyl cysteine attachment. Positions asparagine 142–glutamine 144 are cleaved as a propeptide — removed in mature form.

Belongs to the complexin/synaphin family. Binds to the SNARE core complex containing SNAP25, synaptobrevin and syntaxin-1. Expressed in a subset of neurons in the central nervous system, including large serotoninergic Retzius neurons and pressure-sensitive P cells.

The protein localises to the membrane. In terms of biological role, positively regulates a late step in synaptic vesicle exocytosis. In Hirudo medicinalis (Medicinal leech), this protein is Complexin-1 (cpx1).